A 324-amino-acid chain; its full sequence is D-alanine--D-alanine ligase (324 aa).

The 201-residue stretch at 112–312 (KAVLAAAGVT…FDQLVLWIVE (201 aa)) folds into the ATP-grasp domain. Residue 139-193 (LQPPYVVKPNAEGSSVGVFIIKEGANRPPEEVGAPSWTFGEEVMVEPYIQGMELA) coordinates ATP. D265, E279, and N281 together coordinate Mg(2+).

The protein belongs to the D-alanine--D-alanine ligase family. The cofactor is Mg(2+). Requires Mn(2+) as cofactor.

The protein resides in the cytoplasm. The enzyme catalyses 2 D-alanine + ATP = D-alanyl-D-alanine + ADP + phosphate + H(+). It participates in cell wall biogenesis; peptidoglycan biosynthesis. Its function is as follows. Cell wall formation. The polypeptide is D-alanine--D-alanine ligase (Caulobacter vibrioides (strain ATCC 19089 / CIP 103742 / CB 15) (Caulobacter crescentus)).